A 314-amino-acid chain; its full sequence is DNA-directed RNA polymerase subunit alpha (314 aa).

The tract at residues 1 to 228 is alpha N-terminal domain (alpha-NTD); the sequence is MIEIEKPKIE…EHLNIFVGLT (228 aa). Positions 245-314 are alpha C-terminal domain (alpha-CTD); the sequence is KEKVLEMTIE…ELGLGLRKDD (70 aa).

This sequence belongs to the RNA polymerase alpha chain family. As to quaternary structure, homodimer. RNAP is composed of a core of 2 alpha, a beta and a beta' subunit. The core is associated with a delta subunit, and at least one of epsilon or omega. When a sigma factor is associated with the core the holoenzyme is formed, which can initiate transcription.

It catalyses the reaction RNA(n) + a ribonucleoside 5'-triphosphate = RNA(n+1) + diphosphate. DNA-dependent RNA polymerase catalyzes the transcription of DNA into RNA using the four ribonucleoside triphosphates as substrates. This is DNA-directed RNA polymerase subunit alpha from Bacillus subtilis (strain 168).